Reading from the N-terminus, the 164-residue chain is Urease subunit beta (164 aa).

Polar residues-rich tracts occupy residues 1-10 and 20-32; these read MSTKTNSTKA and TNRGTKSSAGYSE. The segment at 1 to 32 is disordered; sequence MSTKTNSTKATSEKTDSLKTNRGTKSSAGYSE.

The protein belongs to the urease beta subunit family. In terms of assembly, heterotrimer of UreA (gamma), UreB (beta) and UreC (alpha) subunits. Three heterotrimers associate to form the active enzyme.

It localises to the cytoplasm. It catalyses the reaction urea + 2 H2O + H(+) = hydrogencarbonate + 2 NH4(+). It functions in the pathway nitrogen metabolism; urea degradation; CO(2) and NH(3) from urea (urease route): step 1/1. In Yersinia enterocolitica serotype O:8 / biotype 1B (strain NCTC 13174 / 8081), this protein is Urease subunit beta.